Here is a 504-residue protein sequence, read N- to C-terminus: Protein nucleotidyltransferase YdiU (504 aa).

Residues glycine 99, glycine 101, arginine 102, lysine 122, aspartate 134, glycine 135, arginine 185, and arginine 192 each contribute to the ATP site. Catalysis depends on aspartate 261, which acts as the Proton acceptor. Asparagine 262 and aspartate 271 together coordinate Mg(2+). Aspartate 271 lines the ATP pocket.

Belongs to the SELO family. Requires Mg(2+) as cofactor. It depends on Mn(2+) as a cofactor.

It carries out the reaction L-seryl-[protein] + ATP = 3-O-(5'-adenylyl)-L-seryl-[protein] + diphosphate. The enzyme catalyses L-threonyl-[protein] + ATP = 3-O-(5'-adenylyl)-L-threonyl-[protein] + diphosphate. It catalyses the reaction L-tyrosyl-[protein] + ATP = O-(5'-adenylyl)-L-tyrosyl-[protein] + diphosphate. The catalysed reaction is L-histidyl-[protein] + UTP = N(tele)-(5'-uridylyl)-L-histidyl-[protein] + diphosphate. It carries out the reaction L-seryl-[protein] + UTP = O-(5'-uridylyl)-L-seryl-[protein] + diphosphate. The enzyme catalyses L-tyrosyl-[protein] + UTP = O-(5'-uridylyl)-L-tyrosyl-[protein] + diphosphate. Nucleotidyltransferase involved in the post-translational modification of proteins. It can catalyze the addition of adenosine monophosphate (AMP) or uridine monophosphate (UMP) to a protein, resulting in modifications known as AMPylation and UMPylation. This chain is Protein nucleotidyltransferase YdiU, found in Methylococcus capsulatus (strain ATCC 33009 / NCIMB 11132 / Bath).